We begin with the raw amino-acid sequence, 770 residues long: Transferrin receptor protein 1 (770 aa).

The Cytoplasmic segment spans residues 1-70 (MMDQARSAFS…KPKRCNGFIC (70 aa)). Residues 1-70 (MMDQARSAFS…KPKRCNGFIC (70 aa)) form a mediates interaction with SH3BP4 region. Phosphoserine occurs at positions 10 and 19. Position 20 is a phosphotyrosine (Y20). The Endocytosis signal signature appears at 20–23 (YTRF). At T21 the chain carries Phosphothreonine. Phosphoserine is present on S24. The Stop-transfer sequence motif lies at 61–64 (KPKR). 2 S-palmitoyl cysteine lipidation sites follow: C65 and C70. A helical; Signal-anchor for type II membrane protein membrane pass occupies residues 71 to 90 (YGTIAVVLFFLIGFMIGYLG). The Extracellular portion of the chain corresponds to 91 to 770 (YCKRVEPKAG…GDIWDIDNEF (680 aa)). The segment at 102-122 (ERPTGTEALGTERTEPSETEE) is disordered. T107 carries an O-linked (GalNAc...) threonine glycan. In terms of domain architecture, PA spans 233-323 (SKATTVTGRL…GTGDPYTPGF (91 aa)). N-linked (GlcNAc...) asparagine glycans are attached at residues N261, N327, and N384. The segment at 579–770 (TMDLYENLNQ…GDIWDIDNEF (192 aa)) is ligand-binding. Positions 656 to 658 (RGD) match the Cell attachment site motif. Residues N732 and N737 are each glycosylated (N-linked (GlcNAc...) asparagine).

Belongs to the peptidase M28 family. M28B subfamily. In terms of assembly, homodimer; disulfide-linked. Binds one transferrin molecule per subunit. Interacts with SH3BP4. Interacts with STEAP3; facilitates TFRC endocytosis in erythroid precursor cells. Stearoylated by ZDHHC6 which inhibits TFRC-mediated activation of the JNK pathway and promotes mitochondrial fragmentation. Stearoylation does not affect iron uptake. In terms of processing, N- and O-glycosylated, phosphorylated and palmitoylated.

The protein localises to the cell membrane. Its subcellular location is the melanosome. Its function is as follows. Cellular uptake of iron occurs via receptor-mediated endocytosis of ligand-occupied transferrin receptor into specialized endosomes. Endosomal acidification leads to iron release. The apotransferrin-receptor complex is then recycled to the cell surface with a return to neutral pH and the concomitant loss of affinity of apotransferrin for its receptor. Transferrin receptor is necessary for development of erythrocytes and the nervous system. Positively regulates T and B cell proliferation through iron uptake. Acts as a lipid sensor that regulates mitochondrial fusion by regulating activation of the JNK pathway. When dietary levels of stearate (C18:0) are low, promotes activation of the JNK pathway, resulting in HUWE1-mediated ubiquitination and subsequent degradation of the mitofusin MFN2 and inhibition of mitochondrial fusion. When dietary levels of stearate (C18:0) are high, TFRC stearoylation inhibits activation of the JNK pathway and thus degradation of the mitofusin MFN2. Mediates uptake of NICOL1 into fibroblasts where it may regulate extracellular matrix production. The protein is Transferrin receptor protein 1 (TFRC) of Canis lupus familiaris (Dog).